The primary structure comprises 76 residues: uncharacterized protein (76 aa).

A run of 2 helical transmembrane segments spans residues 9–29 and 45–65; these read AIGIVVHLIFIAVTWWALQAV and LLMILLTIAIGTAVANFFLDY.

The protein localises to the cell membrane. This is an uncharacterized protein from Bacillus subtilis (strain 168).